The chain runs to 425 residues: MLDIRQIRENPQIVQELLKRRGEYDLQPIIELDEKQRQLETERSQLQARSNQVGKQVGEKIKSGSDPKGTEIKALKEEGNKVKAKLSELEPEEKELKAKIEALLLPLPNLPSESTPIGKSEAENIEVKRWGDEYIPQNPKIIPHYEIGEKLGIMDFERGVKIAQSRFVALMGAGAALERAIIQFMLKRHIQVGYVEVMAPLLVNSQSLTATGQLPKFAEESFKCAADDLWLIPTSEVSTMNLYRDEILSAEQLPIYHCAFTPCFRREAGAYGKDTRGLIRLHQFNKVEMVKIVHPETSEEEHQKLVADAEAILQALKLPYRILELCSGDLGFSAAKCYDLEVWLPSSGTYREISSCSNVKDFQARRANIRFKERNKKGTQYVHALNGSGLAVGRTMAAILENYQQVDGSVKVPEVLQPYMGREFL.

Residues 41-70 are disordered; sequence TERSQLQARSNQVGKQVGEKIKSGSDPKGT. Residues 44 to 54 show a composition bias toward polar residues; the sequence is SQLQARSNQVG. Residues 57–70 show a composition bias toward basic and acidic residues; it reads VGEKIKSGSDPKGT. Residue 234 to 236 coordinates L-serine; it reads TSE. Residue 265-267 coordinates ATP; sequence RRE. Residue glutamate 288 coordinates L-serine. 352–355 provides a ligand contact to ATP; it reads EISS. Serine 388 lines the L-serine pocket.

The protein belongs to the class-II aminoacyl-tRNA synthetase family. Type-1 seryl-tRNA synthetase subfamily. In terms of assembly, homodimer. The tRNA molecule binds across the dimer.

The protein localises to the cytoplasm. The catalysed reaction is tRNA(Ser) + L-serine + ATP = L-seryl-tRNA(Ser) + AMP + diphosphate + H(+). It carries out the reaction tRNA(Sec) + L-serine + ATP = L-seryl-tRNA(Sec) + AMP + diphosphate + H(+). The protein operates within aminoacyl-tRNA biosynthesis; selenocysteinyl-tRNA(Sec) biosynthesis; L-seryl-tRNA(Sec) from L-serine and tRNA(Sec): step 1/1. Functionally, catalyzes the attachment of serine to tRNA(Ser). Is also able to aminoacylate tRNA(Sec) with serine, to form the misacylated tRNA L-seryl-tRNA(Sec), which will be further converted into selenocysteinyl-tRNA(Sec). The sequence is that of Serine--tRNA ligase from Trichodesmium erythraeum (strain IMS101).